The sequence spans 345 residues: Phosphoribosylformylglycinamidine cyclo-ligase (345 aa).

Belongs to the AIR synthase family.

The protein localises to the cytoplasm. The enzyme catalyses 2-formamido-N(1)-(5-O-phospho-beta-D-ribosyl)acetamidine + ATP = 5-amino-1-(5-phospho-beta-D-ribosyl)imidazole + ADP + phosphate + H(+). Its pathway is purine metabolism; IMP biosynthesis via de novo pathway; 5-amino-1-(5-phospho-D-ribosyl)imidazole from N(2)-formyl-N(1)-(5-phospho-D-ribosyl)glycinamide: step 2/2. The protein is Phosphoribosylformylglycinamidine cyclo-ligase of Shewanella amazonensis (strain ATCC BAA-1098 / SB2B).